Reading from the N-terminus, the 354-residue chain is DNA polymerase IV (354 aa).

One can recognise a UmuC domain in the interval Ile-8–Gly-189. Mg(2+) is bound by residues Asp-12 and Asp-107. The active site involves Glu-108.

Belongs to the DNA polymerase type-Y family. In terms of assembly, monomer. Mg(2+) is required as a cofactor.

It is found in the cytoplasm. The enzyme catalyses DNA(n) + a 2'-deoxyribonucleoside 5'-triphosphate = DNA(n+1) + diphosphate. Functionally, poorly processive, error-prone DNA polymerase involved in untargeted mutagenesis. Copies undamaged DNA at stalled replication forks, which arise in vivo from mismatched or misaligned primer ends. These misaligned primers can be extended by PolIV. Exhibits no 3'-5' exonuclease (proofreading) activity. May be involved in translesional synthesis, in conjunction with the beta clamp from PolIII. The sequence is that of DNA polymerase IV from Vibrio parahaemolyticus serotype O3:K6 (strain RIMD 2210633).